Reading from the N-terminus, the 421-residue chain is Type II methyltransferase M.SfiI (421 aa).

It belongs to the N(4)/N(6)-methyltransferase family. N(4) subfamily.

The catalysed reaction is a 2'-deoxycytidine in DNA + S-adenosyl-L-methionine = an N(4)-methyl-2'-deoxycytidine in DNA + S-adenosyl-L-homocysteine + H(+). In terms of biological role, a beta subtype methylase, recognizes the double-stranded sequence 5'-GGCCNNNNNGGCC-3', methylates C-? on both strands, and protects the DNA from cleavage by the SfiI endonuclease. The polypeptide is Type II methyltransferase M.SfiI (Streptomyces fimbriatus).